The sequence spans 454 residues: Bifunctional protein GlmU (454 aa).

The pyrophosphorylase stretch occupies residues 1-240 (MNVSVVILAA…EEEFMGVNSK (240 aa)). UDP-N-acetyl-alpha-D-glucosamine contacts are provided by residues 8–11 (LAAG), lysine 22, and 87–88 (GT). Position 119 (aspartate 119) interacts with Mg(2+). Positions 152, 166, 181, and 238 each coordinate UDP-N-acetyl-alpha-D-glucosamine. Asparagine 238 is a binding site for Mg(2+). A linker region spans residues 241 to 261 (IQLACAQEIMLQRLREKAMEQ). The segment at 262–454 (GVIMNLPHTI…SDKNEEKKEQ (193 aa)) is N-acetyltransferase. Arginine 325 and lysine 342 together coordinate UDP-N-acetyl-alpha-D-glucosamine. Residue histidine 353 is the Proton acceptor of the active site. 2 residues coordinate UDP-N-acetyl-alpha-D-glucosamine: tyrosine 356 and asparagine 367. Residues alanine 370, 376 to 377 (NY), serine 395, alanine 413, and arginine 430 contribute to the acetyl-CoA site.

In the N-terminal section; belongs to the N-acetylglucosamine-1-phosphate uridyltransferase family. The protein in the C-terminal section; belongs to the transferase hexapeptide repeat family. As to quaternary structure, homotrimer. Mg(2+) is required as a cofactor.

It localises to the cytoplasm. The catalysed reaction is alpha-D-glucosamine 1-phosphate + acetyl-CoA = N-acetyl-alpha-D-glucosamine 1-phosphate + CoA + H(+). It catalyses the reaction N-acetyl-alpha-D-glucosamine 1-phosphate + UTP + H(+) = UDP-N-acetyl-alpha-D-glucosamine + diphosphate. The protein operates within nucleotide-sugar biosynthesis; UDP-N-acetyl-alpha-D-glucosamine biosynthesis; N-acetyl-alpha-D-glucosamine 1-phosphate from alpha-D-glucosamine 6-phosphate (route II): step 2/2. It functions in the pathway nucleotide-sugar biosynthesis; UDP-N-acetyl-alpha-D-glucosamine biosynthesis; UDP-N-acetyl-alpha-D-glucosamine from N-acetyl-alpha-D-glucosamine 1-phosphate: step 1/1. Its pathway is bacterial outer membrane biogenesis; LPS lipid A biosynthesis. Its function is as follows. Catalyzes the last two sequential reactions in the de novo biosynthetic pathway for UDP-N-acetylglucosamine (UDP-GlcNAc). The C-terminal domain catalyzes the transfer of acetyl group from acetyl coenzyme A to glucosamine-1-phosphate (GlcN-1-P) to produce N-acetylglucosamine-1-phosphate (GlcNAc-1-P), which is converted into UDP-GlcNAc by the transfer of uridine 5-monophosphate (from uridine 5-triphosphate), a reaction catalyzed by the N-terminal domain. This chain is Bifunctional protein GlmU, found in Helicobacter hepaticus (strain ATCC 51449 / 3B1).